Reading from the N-terminus, the 391-residue chain is Multidrug resistance protein MdtL (391 aa).

12 helical membrane passes run 4-24 (FLIC…MYLV), 42-62 (IAFS…GKVA), 69-89 (PVAI…SLAE), 93-113 (LFLA…VVAF), 131-151 (LLNG…HLIM), 158-178 (SLFW…LFIL), 203-222 (FFLS…LTFV), 245-265 (ALTA…LGIF), 269-289 (TLMI…AVSP), 293-313 (VSLF…GVAM), 331-351 (LGIA…VVGI), and 356-376 (MLIG…MFVA).

The protein belongs to the major facilitator superfamily. DHA1 family. MdtL (TC 2.A.1.2.22) subfamily.

Its subcellular location is the cell inner membrane. In terms of biological role, confers resistance to chloramphenicol. This chain is Multidrug resistance protein MdtL, found in Escherichia coli (strain 55989 / EAEC).